The following is a 143-amino-acid chain: Hemoglobin subunit alpha-2 (143 aa).

At Ser-2 the chain carries N-acetylserine. Positions 2-143 constitute a Globin domain; that stretch reads SLSSKDKATV…LALALSEKYR (142 aa). An O2-binding site is contributed by His-60. His-89 contributes to the heme b binding site.

The protein belongs to the globin family. In terms of assembly, hb 2 is a heterotetramer of two alpha-2 and two beta-1 chains. Hb 3 is a heterotetramer of two alpha-2 and two beta-2 chains. In terms of tissue distribution, red blood cells.

Involved in oxygen transport from gills to the various peripheral tissues. The chain is Hemoglobin subunit alpha-2 (hba2) from Arctogadus glacialis (Arctic cod).